A 313-amino-acid chain; its full sequence is Ribosomal RNA small subunit methyltransferase H (313 aa).

Residues 35-37 (GGH), Asp-55, Phe-80, Asp-102, and Gln-109 contribute to the S-adenosyl-L-methionine site.

The protein belongs to the methyltransferase superfamily. RsmH family.

It localises to the cytoplasm. The enzyme catalyses cytidine(1402) in 16S rRNA + S-adenosyl-L-methionine = N(4)-methylcytidine(1402) in 16S rRNA + S-adenosyl-L-homocysteine + H(+). In terms of biological role, specifically methylates the N4 position of cytidine in position 1402 (C1402) of 16S rRNA. The protein is Ribosomal RNA small subunit methyltransferase H of Shewanella frigidimarina (strain NCIMB 400).